We begin with the raw amino-acid sequence, 130 residues long: Histone H2A type 1-F (130 aa).

A disordered region spans residues 1 to 22 (MSGRGKQGGKARAKAKTRSSRA). At Ser2 the chain carries Phosphoserine; by RPS6KA5. A Citrulline; alternate modification is found at Arg4. Arg4 bears the Symmetric dimethylarginine; by PRMT5; alternate mark. Lys6 carries the N6-(2-hydroxyisobutyryl)lysine; alternate modification. Lys6 carries the N6-(beta-hydroxybutyryl)lysine; alternate modification. Over residues 7–19 (QGGKARAKAKTRS) the composition is skewed to basic residues. An N6-(2-hydroxyisobutyryl)lysine modification is found at Lys10. The residue at position 10 (Lys10) is an N6-lactoyllysine; alternate. Lys37 is modified (N6-(2-hydroxyisobutyryl)lysine; alternate). Lys37 carries the post-translational modification N6-(beta-hydroxybutyryl)lysine; alternate. Lys37 is modified (N6-crotonyllysine; alternate). Lys75, Lys76, and Lys96 each carry N6-(2-hydroxyisobutyryl)lysine. N6-glutaryllysine; alternate is present on Lys96. At Gln105 the chain carries N5-methylglutamine. The residue at position 119 (Lys119) is an N6-(2-hydroxyisobutyryl)lysine; alternate. Lys119 and Lys120 each carry N6-crotonyllysine; alternate. Lys119 and Lys120 each carry N6-glutaryllysine; alternate. The residue at position 120 (Lys120) is an N6-(beta-hydroxybutyryl)lysine; alternate. Lys120 participates in a covalent cross-link: Glycyl lysine isopeptide (Lys-Gly) (interchain with G-Cter in ubiquitin); alternate. Position 121 is a phosphothreonine; by DCAF1 (Thr121). Residue Lys126 is modified to N6-(beta-hydroxybutyryl)lysine; alternate. Lys126 carries the N6-crotonyllysine; alternate modification. At Lys126 the chain carries N6-glutaryllysine; alternate.

It belongs to the histone H2A family. As to quaternary structure, the nucleosome is a histone octamer containing two molecules each of H2A, H2B, H3 and H4 assembled in one H3-H4 heterotetramer and two H2A-H2B heterodimers. The octamer wraps approximately 147 bp of DNA. Post-translationally, deiminated on Arg-4 in granulocytes upon calcium entry. Monoubiquitination of Lys-120 (H2AK119Ub) by RING1, TRIM37 and RNF2/RING2 complex gives a specific tag for epigenetic transcriptional repression and participates in X chromosome inactivation of female mammals. It is involved in the initiation of both imprinted and random X inactivation. Ubiquitinated H2A is enriched in inactive X chromosome chromatin. Ubiquitination of H2A functions downstream of methylation of 'Lys-27' of histone H3 (H3K27me). H2AK119Ub by RNF2/RING2 can also be induced by ultraviolet and may be involved in DNA repair. Following DNA double-strand breaks (DSBs), it is ubiquitinated through 'Lys-63' linkage of ubiquitin moieties by the E2 ligase UBE2N and the E3 ligases RNF8 and RNF168, leading to the recruitment of repair proteins to sites of DNA damage. Ubiquitination at Lys-14 and Lys-16 (H2AK13Ub and H2AK15Ub, respectively) in response to DNA damage is initiated by RNF168 that mediates monoubiquitination at these 2 sites, and 'Lys-63'-linked ubiquitin are then conjugated to monoubiquitin; RNF8 is able to extend 'Lys-63'-linked ubiquitin chains in vitro. H2AK119Ub and ionizing radiation-induced 'Lys-63'-linked ubiquitination (H2AK13Ub and H2AK15Ub) are distinct events. In terms of processing, phosphorylation on Ser-2 (H2AS1ph) is enhanced during mitosis. Phosphorylation on Ser-2 by RPS6KA5/MSK1 directly represses transcription. Acetylation of H3 inhibits Ser-2 phosphorylation by RPS6KA5/MSK1. Phosphorylation at Thr-121 (H2AT120ph) by DCAF1 is present in the regulatory region of many tumor suppresor genes and down-regulates their transcription. Post-translationally, symmetric dimethylation on Arg-4 by the PRDM1/PRMT5 complex may play a crucial role in the germ-cell lineage. Glutamine methylation at Gln-105 (H2AQ104me) by FBL is specifically dedicated to polymerase I. It is present at 35S ribosomal DNA locus and impairs binding of the FACT complex. In terms of processing, crotonylation (Kcr) is specifically present in male germ cells and marks testis-specific genes in post-meiotic cells, including X-linked genes that escape sex chromosome inactivation in haploid cells. Crotonylation marks active promoters and enhancers and confers resistance to transcriptional repressors. It is also associated with post-meiotically activated genes on autosomes. Post-translationally, hydroxybutyrylation of histones is induced by starvation. Lactylated in macrophages by EP300/P300 by using lactoyl-CoA directly derived from endogenous or exogenous lactate, leading to stimulates gene transcription.

The protein resides in the nucleus. It localises to the chromosome. Core component of nucleosome. Nucleosomes wrap and compact DNA into chromatin, limiting DNA accessibility to the cellular machineries which require DNA as a template. Histones thereby play a central role in transcription regulation, DNA repair, DNA replication and chromosomal stability. DNA accessibility is regulated via a complex set of post-translational modifications of histones, also called histone code, and nucleosome remodeling. In Mus musculus (Mouse), this protein is Histone H2A type 1-F (Hist1h2af).